The primary structure comprises 464 residues: Cysteine--tRNA ligase (464 aa).

Cys28 is a binding site for Zn(2+). The 'HIGH' region motif lies at 30–40 (PTVYDTAHIGN). Residues Cys212, His237, and Glu241 each coordinate Zn(2+). A 'KMSKS' region motif is present at residues 270 to 274 (KMSKS). Lys273 provides a ligand contact to ATP.

Belongs to the class-I aminoacyl-tRNA synthetase family. Monomer. Requires Zn(2+) as cofactor.

Its subcellular location is the cytoplasm. The catalysed reaction is tRNA(Cys) + L-cysteine + ATP = L-cysteinyl-tRNA(Cys) + AMP + diphosphate. In Wolbachia pipientis subsp. Culex pipiens (strain wPip), this protein is Cysteine--tRNA ligase.